Here is a 184-residue protein sequence, read N- to C-terminus: MEHQVSAALREFTQRYVAQWQQQHGDWPSSHALYGIPSPCVVYSRDDCVFWRPEPGRGEDLEGIGRALDIRLHPALAPFFTTQYAGDMRARWNEIEMDLVQVWSVEDLHRLQENQIGHLVTQRRLKLSPTLFLASTADELSMVTLCNLSGSVLLEQFGSPQRRVLAQTLTEFLAELQPLAQEVG.

It belongs to the Syd family.

Its subcellular location is the cell inner membrane. Its function is as follows. Interacts with the SecY protein in vivo. May bind preferentially to an uncomplexed state of SecY, thus functioning either as a chelating agent for excess SecY in the cell or as a regulatory factor that negatively controls the translocase function. In Edwardsiella ictaluri (strain 93-146), this protein is Protein Syd.